A 290-amino-acid chain; its full sequence is D-tagatose-1,6-bisphosphate aldolase subunit KbaY (290 aa).

Asp-82 functions as the Proton donor in the catalytic mechanism. Zn(2+) contacts are provided by His-83 and His-180. Position 181 (Gly-181) interacts with dihydroxyacetone phosphate. His-208 contacts Zn(2+). Dihydroxyacetone phosphate is bound by residues 209 to 211 (GAS) and 230 to 233 (NVAT).

The protein belongs to the class II fructose-bisphosphate aldolase family. TagBP aldolase KbaY subfamily. Homotetramer. Forms a complex with KbaZ. Requires Zn(2+) as cofactor.

It carries out the reaction D-tagatofuranose 1,6-bisphosphate = D-glyceraldehyde 3-phosphate + dihydroxyacetone phosphate. Its pathway is carbohydrate metabolism; D-tagatose 6-phosphate degradation; D-glyceraldehyde 3-phosphate and glycerone phosphate from D-tagatose 6-phosphate: step 2/2. Catalytic subunit of the tagatose-1,6-bisphosphate aldolase KbaYZ, which catalyzes the reversible aldol condensation of dihydroxyacetone phosphate (DHAP or glycerone-phosphate) with glyceraldehyde 3-phosphate (G3P) to produce tagatose 1,6-bisphosphate (TBP). Requires KbaZ subunit for full activity and stability. The protein is D-tagatose-1,6-bisphosphate aldolase subunit KbaY of Citrobacter koseri (strain ATCC BAA-895 / CDC 4225-83 / SGSC4696).